The primary structure comprises 36 residues: Conotoxin Cl14.10 (36 aa).

Residues 1–2 constitute a propeptide that is removed on maturation; it reads NE.

Contains 2 disulfide bond. In terms of tissue distribution, expressed by the venom duct.

The protein localises to the secreted. The protein is Conotoxin Cl14.10 of Californiconus californicus (California cone).